Here is a 432-residue protein sequence, read N- to C-terminus: Alcohol acyltransferase 9 (432 aa).

Residues histidine 156 and aspartate 379 each act as proton acceptor in the active site.

Belongs to the plant acyltransferase family. In terms of tissue distribution, expressed in fruit.

It catalyses the reaction 2-(methylsulfanyl)acetyl-CoA + butan-1-ol = butyl 2-(methylsulfanyl)acetate + CoA. It carries out the reaction ethanol + acetyl-CoA = ethyl acetate + CoA. The catalysed reaction is butan-1-ol + acetyl-CoA = butyl acetate + CoA. The enzyme catalyses butan-1-ol + propanoyl-CoA = butyl propanoate + CoA. Involved in the biosynthesis of volatile esters which confer kiwifruit flavor. Alcohol acyl transferase that can use a wide range of alcohols as substrate to produce esters. Exhibits acetyl-CoA:alcohol O-acyltransferase activity. This is Alcohol acyltransferase 9 from Actinidia eriantha (Velvet vine).